We begin with the raw amino-acid sequence, 190 residues long: Threonylcarbamoyl-AMP synthase (190 aa).

The region spanning 7 to 190 is the YrdC-like domain; that stretch reads IGSIAAAVDL…ALTGELFRQG (184 aa).

The protein belongs to the SUA5 family. TsaC subfamily.

The protein resides in the cytoplasm. It carries out the reaction L-threonine + hydrogencarbonate + ATP = L-threonylcarbamoyladenylate + diphosphate + H2O. Functionally, required for the formation of a threonylcarbamoyl group on adenosine at position 37 (t(6)A37) in tRNAs that read codons beginning with adenine. Catalyzes the conversion of L-threonine, HCO(3)(-)/CO(2) and ATP to give threonylcarbamoyl-AMP (TC-AMP) as the acyladenylate intermediate, with the release of diphosphate. The protein is Threonylcarbamoyl-AMP synthase of Salmonella typhimurium (strain LT2 / SGSC1412 / ATCC 700720).